Consider the following 244-residue polypeptide: tRNA (guanine-N(7)-)-methyltransferase (244 aa).

The interval 1-20 (MTNPFDSAGSKAPPKPFTVS) is disordered. Residues Glu-75, Glu-100, Asp-127, and Asp-150 each coordinate S-adenosyl-L-methionine. Asp-150 is a catalytic residue. Lys-154 serves as a coordination point for substrate. The segment at 156-161 (RHNKRR) is interaction with RNA. Substrate is bound by residues Asp-186 and 223–226 (THFE).

It belongs to the class I-like SAM-binding methyltransferase superfamily. TrmB family.

It carries out the reaction guanosine(46) in tRNA + S-adenosyl-L-methionine = N(7)-methylguanosine(46) in tRNA + S-adenosyl-L-homocysteine. It participates in tRNA modification; N(7)-methylguanine-tRNA biosynthesis. Functionally, catalyzes the formation of N(7)-methylguanine at position 46 (m7G46) in tRNA. The chain is tRNA (guanine-N(7)-)-methyltransferase from Stenotrophomonas maltophilia (strain K279a).